We begin with the raw amino-acid sequence, 317 residues long: MAKDGFELYRYTPELGASILFTVLFAVSGVAFVILLFHYSVKSKRRVGSLMKSQPVLRYYGTVNLAGAYIPFIFGCFVECVGFAFRCKSSKDTTLLNPYIIQTVFLLVSPTLYAASIYMIFGRMATLLFAENLMIMPARFNTTIFVIGDVGSLLLQAIGGAMMSKVTSASSGSHLVTAGLFIQIAFFGLFIINEVLFIFKMSKKPTNVSVRYGSWKYLNIALLVNSFLILIRSIVRAVEFIQGYDGEIASHEWYLYIFDGLPMFLLVLIFIVAFPLINIFRIHEESIQAQQSARFDGTDYPDVEVTSIEEDLASKSE.

Topologically, residues 1 to 16 (MAKDGFELYRYTPELG) are extracellular. Residues 17–37 (ASILFTVLFAVSGVAFVILLF) traverse the membrane as a helical segment. Residues 38–64 (HYSVKSKRRVGSLMKSQPVLRYYGTVN) lie on the Cytoplasmic side of the membrane. The helical transmembrane segment at 65-85 (LAGAYIPFIFGCFVECVGFAF) threads the bilayer. Over 86–99 (RCKSSKDTTLLNPY) the chain is Extracellular. Residues 100–120 (IIQTVFLLVSPTLYAASIYMI) form a helical membrane-spanning segment. Residues 121-142 (FGRMATLLFAENLMIMPARFNT) are Cytoplasmic-facing. A helical membrane pass occupies residues 143–163 (TIFVIGDVGSLLLQAIGGAMM). Topologically, residues 164-178 (SKVTSASSGSHLVTA) are extracellular. Residues 179 to 199 (GLFIQIAFFGLFIINEVLFIF) form a helical membrane-spanning segment. The Cytoplasmic segment spans residues 200 to 214 (KMSKKPTNVSVRYGS). The chain crosses the membrane as a helical span at residues 215-235 (WKYLNIALLVNSFLILIRSIV). Topologically, residues 236 to 259 (RAVEFIQGYDGEIASHEWYLYIFD) are extracellular. Residues 260–280 (GLPMFLLVLIFIVAFPLINIF) form a helical membrane-spanning segment. The Cytoplasmic portion of the chain corresponds to 281–317 (RIHEESIQAQQSARFDGTDYPDVEVTSIEEDLASKSE).

Belongs to the lipid-translocating exporter (LTE) (TC 9.A.26.1) family.

It is found in the membrane. In terms of biological role, involved in 7-aminocholesterol resistance. This is Protein RTA1 (RTA1) from Saccharomyces cerevisiae (strain ATCC 204508 / S288c) (Baker's yeast).